The chain runs to 703 residues: Elongation factor G 2 (703 aa).

The tr-type G domain maps to 8-291; that stretch reads ELYRNIGIVA…AVIDYLPAPS (284 aa). GTP-binding positions include 17–24, 89–93, and 143–146; these read AHVDAGKT, DTPGH, and NKMD.

This sequence belongs to the TRAFAC class translation factor GTPase superfamily. Classic translation factor GTPase family. EF-G/EF-2 subfamily.

It localises to the cytoplasm. In terms of biological role, catalyzes the GTP-dependent ribosomal translocation step during translation elongation. During this step, the ribosome changes from the pre-translocational (PRE) to the post-translocational (POST) state as the newly formed A-site-bound peptidyl-tRNA and P-site-bound deacylated tRNA move to the P and E sites, respectively. Catalyzes the coordinated movement of the two tRNA molecules, the mRNA and conformational changes in the ribosome. This chain is Elongation factor G 2 (fusB), found in Pseudomonas putida (strain ATCC 47054 / DSM 6125 / CFBP 8728 / NCIMB 11950 / KT2440).